The sequence spans 186 residues: Oligoribonuclease (186 aa).

Residues 8-171 (LIWIDLEMTG…DDIRESIAEL (164 aa)) enclose the Exonuclease domain. Residue Tyr-129 is part of the active site.

Belongs to the oligoribonuclease family.

The protein localises to the cytoplasm. 3'-to-5' exoribonuclease specific for small oligoribonucleotides. In Mannheimia succiniciproducens (strain KCTC 0769BP / MBEL55E), this protein is Oligoribonuclease.